The primary structure comprises 582 residues: SUMO-activating enzyme subunit uba-2 (582 aa).

ATP contacts are provided by residues 20–25 (GAGGIG), Asp44, 52–55 (NLNR), Lys68, 91–92 (SI), and 113–118 (DNRAAR). Cys154 and Cys157 together coordinate Zn(2+). The Glycyl thioester intermediate role is filled by Cys170. Residues 204–214 (SPDMDAVDPDN) show a composition bias toward acidic residues. The interval 204–235 (SPDMDAVDPDNTEAVTTEKEKEAMKEEPAPVG) is disordered. Residues 219–231 (TTEKEKEAMKEEP) show a composition bias toward basic and acidic residues. The Zn(2+) site is built by Cys431 and Cys434. Over residues 531–570 (FEVARSEKEPEPDDRKRKADGSEEPEAKRQKVEEKDDKNG) the composition is skewed to basic and acidic residues. Residues 531-582 (FEVARSEKEPEPDDRKRKADGSEEPEAKRQKVEEKDDKNGNEAVAEITETMA) are disordered.

This sequence belongs to the ubiquitin-activating E1 family. As to quaternary structure, heterodimer with aos-1.

Its pathway is protein modification; protein sumoylation. The dimeric enzyme acts as an E1 ligase for smo-1. It mediates ATP-dependent activation of smo-1 and formation of a thioester with a conserved cysteine residue on uba-2. This is SUMO-activating enzyme subunit uba-2 (uba-2) from Caenorhabditis elegans.